A 219-amino-acid polypeptide reads, in one-letter code: Oxaloacetate tautomerase YcgM (219 aa).

Residues Glu-70, Glu-72, and Asp-101 each coordinate Mg(2+).

This sequence belongs to the FAH family. It depends on a divalent metal cation as a cofactor.

It carries out the reaction oxaloacetate = enol-oxaloacetate. Tautomerase that converts enol-oxaloacetate to the keto form of oxaloacetate. The polypeptide is Oxaloacetate tautomerase YcgM (Escherichia coli (strain K12)).